An 876-amino-acid chain; its full sequence is Neurotrypsin (876 aa).

Residues 1 to 20 (MTLARFVLALMLGALPEVVG) form the signal peptide. Asparagine 26 carries N-linked (GlcNAc...) asparagine glycosylation. The interval 29–89 (LHHSHRHSPP…ALQAGHTPRP (61 aa)) is disordered. Low complexity predominate over residues 43–54 (YPSYYLPTQQRP). Over residues 57–72 (TRPPPPLPRFPRPPRA) the composition is skewed to pro residues. The Kringle domain occupies 94–166 (CPAGEPWVSV…GKVDWGYCDC (73 aa)). Disulfide bonds link cysteine 94–cysteine 166, cysteine 110–cysteine 150, cysteine 139–cysteine 164, cysteine 196–cysteine 260, cysteine 209–cysteine 270, cysteine 240–cysteine 250, cysteine 306–cysteine 370, cysteine 319–cysteine 380, cysteine 350–cysteine 360, cysteine 413–cysteine 476, cysteine 426–cysteine 486, cysteine 456–cysteine 466, cysteine 526–cysteine 590, cysteine 539–cysteine 600, cysteine 570–cysteine 580, cysteine 620–cysteine 751, cysteine 662–cysteine 678, cysteine 766–cysteine 832, cysteine 795–cysteine 809, and cysteine 822–cysteine 851. SRCR domains follow at residues 171-272 (VRLR…TCSF), 281-382 (IRLA…SCTP), 388-488 (IRLA…ACYP), and 501-602 (VRLM…ICDY). The segment at 620–631 (CGLRLLHRRQKR) is zymogen activation region. Positions 632-875 (IIGGKNSLRG…FVPWIKSVTK (244 aa)) constitute a Peptidase S1 domain. The active-site Charge relay system is histidine 677. An N-linked (GlcNAc...) asparagine glycan is attached at asparagine 684. The Charge relay system role is filled by aspartate 727. Serine 826 (charge relay system) is an active-site residue.

Belongs to the peptidase S1 family.

It is found in the secreted. Its function is as follows. Plays a role in neuronal plasticity and the proteolytic action may subserve structural reorganizations associated with learning and memory operations. The sequence is that of Neurotrypsin (PRSS12) from Gorilla gorilla gorilla (Western lowland gorilla).